A 704-amino-acid polypeptide reads, in one-letter code: Elongation factor G (704 aa).

One can recognise a tr-type G domain in the interval 8 to 291; it reads DKVRNIGIMA…AVVDYLASPL (284 aa). GTP is bound by residues 17-24, 90-94, and 144-147; these read AHIDAGKT, DTPGH, and NKMD.

Belongs to the TRAFAC class translation factor GTPase superfamily. Classic translation factor GTPase family. EF-G/EF-2 subfamily.

It is found in the cytoplasm. In terms of biological role, catalyzes the GTP-dependent ribosomal translocation step during translation elongation. During this step, the ribosome changes from the pre-translocational (PRE) to the post-translocational (POST) state as the newly formed A-site-bound peptidyl-tRNA and P-site-bound deacylated tRNA move to the P and E sites, respectively. Catalyzes the coordinated movement of the two tRNA molecules, the mRNA and conformational changes in the ribosome. The chain is Elongation factor G from Chlorobium phaeovibrioides (strain DSM 265 / 1930) (Prosthecochloris vibrioformis (strain DSM 265)).